The following is a 436-amino-acid chain: Probable transporter MCH1 (436 aa).

A run of 7 helical transmembrane segments spans residues 27–47, 66–86, 93–113, 119–139, 155–175, 188–208, and 249–269; these read VVAF…LLFT, MISS…GYLA, LLSL…SYLV, SVIG…SLYF, LAIS…AQIL, LEVV…ASFV, and FVSF…ILNI. An N-linked (GlcNAc...) asparagine glycan is attached at Asn278. 5 consecutive transmembrane segments (helical) span residues 295 to 312, 325 to 345, 347 to 367, 373 to 393, and 410 to 430; these read VSIM…LGVL, LLVV…SAIL, GVSY…IWGI, TWGS…MFYG, and TAGA…IWYA.

Belongs to the major facilitator superfamily.

It localises to the vacuole membrane. Functionally, probable transporter. This chain is Probable transporter MCH1 (MCH1), found in Candida albicans (strain SC5314 / ATCC MYA-2876) (Yeast).